We begin with the raw amino-acid sequence, 311 residues long: MADVQAPTIGGAGRYAPSPSGDLHLGNLRTALLAWLFARASGRRFLLRVEDLDRVRPGAQQRQLADLRAIGLDWDGPVVCQSQRRTRYEAAITRLREAGLTYECYCTRREIQQAATAPHGPLGAYPGTCRDLSDADRAERRAQGRPAALRLRAERTDFEIVDQLHGRYRGPVDDVVLRRGDGLPAYNLAVVVDDAAQGVDQVVRGDDLLPSTPRQAYLATLLGLPVPAYAHVPLVLNKDGQRLAKRDGAVTLADQQRAGKSPEQVLALLTDSLGLPPRPPRELLADFDPARLPREPWILTDNGLLQPSECP.

Residues 14-18 (RYAPS) and Glu-50 contribute to the L-glutamate site. Positions 17–27 (PSPSGDLHLGN) match the 'HIGH' region motif. Zn(2+) is bound by residues Cys-104, Cys-106, Tyr-125, and Cys-129. L-glutamate is bound by residues Tyr-186 and Arg-204. Residues 242 to 246 (RLAKR) carry the 'KMSKS' region motif. Lys-245 lines the ATP pocket.

Belongs to the class-I aminoacyl-tRNA synthetase family. GluQ subfamily. The cofactor is Zn(2+).

Its function is as follows. Catalyzes the tRNA-independent activation of glutamate in presence of ATP and the subsequent transfer of glutamate onto a tRNA(Asp). Glutamate is transferred on the 2-amino-5-(4,5-dihydroxy-2-cyclopenten-1-yl) moiety of the queuosine in the wobble position of the QUC anticodon. This chain is Glutamyl-Q tRNA(Asp) synthetase, found in Nocardia farcinica (strain IFM 10152).